The primary structure comprises 144 residues: Large ribosomal subunit protein uL16 (144 aa).

This sequence belongs to the universal ribosomal protein uL16 family. As to quaternary structure, part of the 50S ribosomal subunit.

Functionally, binds 23S rRNA and is also seen to make contacts with the A and possibly P site tRNAs. In Bacillus pumilus (strain SAFR-032), this protein is Large ribosomal subunit protein uL16.